We begin with the raw amino-acid sequence, 354 residues long: DNA polymerase IV (354 aa).

Positions 6–187 (IIHVDCDCFY…LPVARLHGVG (182 aa)) constitute a UmuC domain. 2 residues coordinate Mg(2+): D10 and D105. The active site involves E106.

It belongs to the DNA polymerase type-Y family. Monomer. Requires Mg(2+) as cofactor.

Its subcellular location is the cytoplasm. The catalysed reaction is DNA(n) + a 2'-deoxyribonucleoside 5'-triphosphate = DNA(n+1) + diphosphate. Functionally, poorly processive, error-prone DNA polymerase involved in untargeted mutagenesis. Copies undamaged DNA at stalled replication forks, which arise in vivo from mismatched or misaligned primer ends. These misaligned primers can be extended by PolIV. Exhibits no 3'-5' exonuclease (proofreading) activity. May be involved in translesional synthesis, in conjunction with the beta clamp from PolIII. This Pseudomonas putida (strain ATCC 47054 / DSM 6125 / CFBP 8728 / NCIMB 11950 / KT2440) protein is DNA polymerase IV.